Consider the following 2641-residue polypeptide: Inverse autotransporter adhesin YeeJ (2641 aa).

The N-terminal stretch at 1–26 (MGIKLRRLTAGICLVTQLAFPMAAAA) is a signal peptide. The LysM domain maps to 50–98 (VPYILGALESAQSVAERFGISVAELRKLNQFRTFARGFDNVRQGDELDV). The interval 99-118 (PAQVSEKKLTPPPGNSSDNL) is disordered. The interval 125–400 (TSQQIGSLLA…SRYDLVDRNN (276 aa)) is inverse autotransporter. The interval 513–605 (QKDSSVSLST…GVDAAKAPAV (93 aa)) is invasin 3 domain. Big-1 domains follow at residues 617 to 711 (HSSI…AGFI), 721 to 815 (IATL…VSFV), 822 to 913 (QVDL…VNFI), 920 to 1017 (ALTL…MTFV), 1024 to 1116 (VVVL…VNIA), 1123 to 1220 (QVTL…VTFV), 1227 to 1319 (VVVL…VNIA), 1326 to 1423 (QVTL…VTFV), 1430 to 1523 (QVVL…VHFI), 1531 to 1633 (IIEL…SINV), 1641 to 1734 (HLTL…VTYV), 1741 to 1837 (EISL…VNFT), 1844 to 1941 (QVNL…VTLI), 1948 to 2032 (KLTS…PTEV), 2048 to 2139 (FTSL…LEAI), 2142 to 2236 (KLTL…VKVT), and 2244 to 2336 (VASF…ITLV). The tract at residues 2538–2641 (KSWWVNAGDA…FAHATCYKNL (104 aa)) is C-type lectin domain.

Belongs to the intimin/invasin family.

It localises to the cell outer membrane. Functionally, a probable inverse autotransporter, it may be involved in biofilm formation and cell adhesion. May bind peptidoglycan via its LysM domain. Upon overexpression shows increased mature biofilm formation. The polypeptide is Inverse autotransporter adhesin YeeJ (Escherichia coli O17:K52:H18 (strain UMN026 / ExPEC)).